Consider the following 512-residue polypeptide: ATP synthase subunit alpha (512 aa).

169–176 contributes to the ATP binding site; sequence GDRQTGKT.

It belongs to the ATPase alpha/beta chains family. F-type ATPases have 2 components, CF(1) - the catalytic core - and CF(0) - the membrane proton channel. CF(1) has five subunits: alpha(3), beta(3), gamma(1), delta(1), epsilon(1). CF(0) has three main subunits: a(1), b(2) and c(9-12). The alpha and beta chains form an alternating ring which encloses part of the gamma chain. CF(1) is attached to CF(0) by a central stalk formed by the gamma and epsilon chains, while a peripheral stalk is formed by the delta and b chains.

It is found in the cell inner membrane. The enzyme catalyses ATP + H2O + 4 H(+)(in) = ADP + phosphate + 5 H(+)(out). Produces ATP from ADP in the presence of a proton gradient across the membrane. The alpha chain is a regulatory subunit. In Azoarcus sp. (strain BH72), this protein is ATP synthase subunit alpha.